The chain runs to 126 residues: Small ribosomal subunit protein uS13 (126 aa).

Residues 99-126 (LRGQSTKNNARTRKGKRKTVANKKRVTK) are disordered. Basic residues predominate over residues 108-126 (ARTRKGKRKTVANKKRVTK).

The protein belongs to the universal ribosomal protein uS13 family. In terms of assembly, part of the 30S ribosomal subunit. Forms a loose heterodimer with protein S19. Forms two bridges to the 50S subunit in the 70S ribosome.

Functionally, located at the top of the head of the 30S subunit, it contacts several helices of the 16S rRNA. In the 70S ribosome it contacts the 23S rRNA (bridge B1a) and protein L5 of the 50S subunit (bridge B1b), connecting the 2 subunits; these bridges are implicated in subunit movement. Contacts the tRNAs in the A and P-sites. In Azobacteroides pseudotrichonymphae genomovar. CFP2, this protein is Small ribosomal subunit protein uS13.